The chain runs to 189 residues: MNYNIRGENIEVTPALKDHVERKIGKLERYFDHSVDADVNVNLKFYNDKESKVEVTIPMTDLALRSEVHNEDMYNAIDLATNKLERQIRKHKTKVNRKFREQGSPKYLLANGLGSDTDIAVQDDIEEEESLDIVRQKRFNLKPMDSEEAILQMNMLGHNFFVFTNAETNLTNVVYRRNDGKYGLIEPTE.

Belongs to the HPF/YfiA ribosome-associated protein family. Long HPF subfamily. As to quaternary structure, interacts with 100S ribosomes. Not associated with 70S ribosome monomers, about 1 monomer per ribosome.

It localises to the cytoplasm. Its function is as follows. Required for dimerization of active 70S ribosomes into 100S ribosomes in stationary phase; 100S ribosomes are translationally inactive and sometimes present during exponential growth. May not be the only factor implicated. Might negatively regulate the activity of the sigma-54 factor (SigL). The protein is Ribosome hibernation promotion factor (yvyD) of Bacillus subtilis (strain 168).